Consider the following 251-residue polypeptide: Hydroxyacylglutathione hydrolase (251 aa).

7 residues coordinate Zn(2+): His-53, His-55, Asp-57, His-58, His-110, Asp-127, and His-165.

It belongs to the metallo-beta-lactamase superfamily. Glyoxalase II family. As to quaternary structure, monomer. Zn(2+) serves as cofactor.

It carries out the reaction an S-(2-hydroxyacyl)glutathione + H2O = a 2-hydroxy carboxylate + glutathione + H(+). It participates in secondary metabolite metabolism; methylglyoxal degradation; (R)-lactate from methylglyoxal: step 2/2. Thiolesterase that catalyzes the hydrolysis of S-D-lactoyl-glutathione to form glutathione and D-lactic acid. This chain is Hydroxyacylglutathione hydrolase, found in Escherichia coli (strain 55989 / EAEC).